A 338-amino-acid chain; its full sequence is Mitoferrin-1 (338 aa).

The interval 1–37 is disordered; it reads MELRRGGVGSQAAGRRMDGDCRDGGCGSKDAGSEDYE. Solcar repeat units lie at residues 43-131, 141-225, and 232-326; these read ASVS…MKRT, NSHL…LQEQ, and YNPQ…FKYF. 6 consecutive transmembrane segments (helical) span residues 45–64, 106–125, 143–162, 200–219, 234–253, and 301–320; these read VSTH…SIMY, GLNV…FACY, HLAN…AVMN, SYTT…FITY, PQSH…AATT, and GIQA…WSVY.

Belongs to the mitochondrial carrier (TC 2.A.29) family. As to quaternary structure, interacts with ACB10; this interaction stabilizes SLC25A37 and enhances the function of SLC25A37 to import mitochondrial iron during erythroid differentiation.

The protein localises to the mitochondrion inner membrane. It carries out the reaction Fe(2+)(in) = Fe(2+)(out). In terms of biological role, mitochondrial iron transporter that specifically mediates iron uptake in developing erythroid cells, thereby playing an essential role in heme biosynthesis. In Rattus norvegicus (Rat), this protein is Mitoferrin-1 (Slc25a37).